Consider the following 469-residue polypeptide: Gamma-aminobutyric acid permease (469 aa).

Residues 1–17 (MNQSQSGLKKELKTRHM) are Cytoplasmic-facing. The chain crosses the membrane as a helical span at residues 18–38 (TMISIAGVIGAGLFVGSGSVI). Residue H39 is a topological domain, extracellular. A helical membrane pass occupies residues 40–60 (STGPGAVVSYALAGLLVIFIM). The Cytoplasmic segment spans residues 61–94 (RMLGEMSAVNPTSGSFSQYAHDAIGPWAGFTIGW). Residues 95-115 (LYWFFWVIVIAIEAIAGAGII) traverse the membrane as a helical segment. Q116 is a topological domain (extracellular). A helical membrane pass occupies residues 117–137 (YWFHDIPLWLTSLILTIVLTL). At 138–157 (TNVYSVKSFGEFEYWFSLIK) the chain is on the cytoplasmic side. A helical transmembrane segment spans residues 158-178 (VVTIIAFLIVGFAFIFGFAPG). The Extracellular segment spans residues 179–200 (SEPVGFSNLTGKGGFFPEGISS). The helical transmembrane segment at 201 to 221 (VLLGIVVVIFSFMGTEIVAIA) threads the bilayer. Topologically, residues 222 to 242 (AGETSNPIESVTKATRSVVWR) are cytoplasmic. A helical transmembrane segment spans residues 243-263 (IIVFYVGSIAIVVALLPWNSA). At 264–269 (NILESP) the chain is on the extracellular side. A helical transmembrane segment spans residues 270-290 (FVAVLEHIGVPAAAQIMNFIV). Over 291–328 (LTAVLSCLNSGLYTTSRMLYSLAERNEAPRRFMKLSKK) the chain is Cytoplasmic. Residues 329–349 (GVPVQAIVAGTFFSYIAVVMN) form a helical membrane-spanning segment. The Extracellular segment spans residues 350–355 (YFSPDT). Residues 356-376 (VFLFLVNSSGAIALLVYLVIA) traverse the membrane as a helical segment. The Cytoplasmic segment spans residues 377–401 (VSQLKMRKKLEKTNPEALKIKMWLF). Residues 402–422 (PFLTYLTIIAICGILVSMAFI) traverse the membrane as a helical segment. The Extracellular portion of the chain corresponds to 423–425 (DSM). The helical transmembrane segment at 426–446 (RDELLLTGVITGIVLISYLVF) threads the bilayer. The Cytoplasmic portion of the chain corresponds to 447–469 (RKRKVSEKAAANPVTQQQPDILP).

This sequence belongs to the amino acid-polyamine-organocation (APC) superfamily. Amino acid transporter (AAT) (TC 2.A.3.1) family.

Its subcellular location is the cell membrane. It carries out the reaction 4-aminobutanoate(in) + H(+)(in) = 4-aminobutanoate(out) + H(+)(out). The enzyme catalyses beta-alanine(in) + H(+)(in) = beta-alanine(out) + H(+)(out). Its pathway is amino-acid degradation; 4-aminobutanoate degradation. Functionally, transporter for gamma-aminobutyrate (GABA). Can also transport beta-alanine. Can translocate several open-chain GABA analogs (3-aminobutyrate, 3-aminopropanoate, cis-4-aminobutenoate) across the membrane via counterflow against GABA, but cannot transport muscimol. Also functions as a low-affinity proline importer. This chain is Gamma-aminobutyric acid permease, found in Bacillus subtilis (strain 168).